We begin with the raw amino-acid sequence, 61 residues long: Sec-independent protein translocase protein TatA (61 aa).

A helical transmembrane segment spans residues 2-22 (GLSGISPLSLLLILAIIVALF).

Belongs to the TatA/E family. The Tat system comprises two distinct complexes: a TatABC complex, containing multiple copies of TatA, TatB and TatC subunits, and a separate TatA complex, containing only TatA subunits. Substrates initially bind to the TatABC complex, which probably triggers association of the separate TatA complex to form the active translocon.

It localises to the cell inner membrane. In terms of biological role, part of the twin-arginine translocation (Tat) system that transports large folded proteins containing a characteristic twin-arginine motif in their signal peptide across membranes. TatA could form the protein-conducting channel of the Tat system. The chain is Sec-independent protein translocase protein TatA from Legionella pneumophila (strain Corby).